The following is a 711-amino-acid chain: Taperin (711 aa).

Disordered stretches follow at residues 134-305 (SRLL…APKP), 328-384 (RNSF…LGKS), and 414-438 (QRPSSPPPFLPAASEEAEPAEGLRV). Pro residues predominate over residues 157–180 (PPPPPPPPAPPRPPPAAPSPPAAP). The span at 197–206 (LQKTGSNSFT) shows a compositional bias: polar residues. Phosphoserine is present on Ser-241. Residues 267-282 (TPSATPASPPASATPS) are compositionally biased toward low complexity. Positions 283–296 (QRQCVSAATSTNDS) are enriched in polar residues. Ser-362, Ser-418, and Ser-463 each carry phosphoserine. 4 disordered regions span residues 500 to 535 (TFTVVPKRKPGTLQDQHFSQANREPRPREAEEEEAS), 572 to 630 (SRKK…EKPF), 642 to 662 (SVRPESSRLPEGSSGLSSYTP), and 674 to 711 (QALEQAPREAEPPPVEAMLTPASQNDLSDFRSEPALYF). Polar residues-rich tracts occupy residues 512–521 (LQDQHFSQAN) and 581–590 (NDKSLQTTFE). Residues 597–624 (LEQEEEVDQQEEEEEEEEEEEEEEEGSG) show a composition bias toward acidic residues.

This sequence belongs to the taperin family. In terms of assembly, interacts with GRXCR2; the interaction restricts TPRN to the stereocilum basal region. Interacts with actin ACTB; the interaction may stabilize stereocilia. Interacts with CLIC5. Interacts with PTPRQ. TPRN, CLIC5 and PTPQR form concentric rings at the base of stereocilia and may form a complex. Interacts with phosphatase PPP1CA; the interaction results in inhibition of PPC1A phosphatase activity. Interacts with DNA damage response proteins XRCC6/KU70, XRCC5/KU80, PARP1, TOP1 and TOP2A; these interactions recruit TPRN to sites of DNA damage where it may play a role in DNA repair. Expression is detected in fetal cochlea.

The protein resides in the cell projection. The protein localises to the stereocilium. Its subcellular location is the microvillus. It is found in the nucleus. It localises to the nucleoplasm. The protein resides in the cytoplasm. Functionally, essential for hearing. Required for maintenance of stereocilia on both inner and outer hair cells. Necessary for the integrity of the stereociliary rootlet. May act as an actin cytoskeleton regulator involved in the regulation of actin dynamics at the pointed end in hair cells. Forms rings at the base of stereocilia and binds actin filaments in the stereocilia which may stabilize the stereocilia. Acts as a strong inhibitor of PPP1CA phosphatase activity. Recruited to sites of DNA damage and may play a role in DNA damage repair. This Homo sapiens (Human) protein is Taperin (TPRN).